The following is a 333-amino-acid chain: MQTEQLLHQLFEKKALNQQQTEFLFTAIVRGQLDNSQLSAALIALKLRGETPEEISGAVTALQADAESFPIPDYPFADIVGTGGDGANTINISTASAIVAASYGLKVAKHGNRSVSSQTGASDLLTALGVNVHISAHKARQALDEIGLCFLFAPQYHLGFQHAIPVRQALKTRTIFNILGPLINPAKPKRQLLGVYSSDLIQPYAETVARLGHEHSVVVHGSGLDEIALHGVTEVAEIKAGQIERYTLTPQDFGFQPQPLETLRGGKPSENAQILTALLQGKGKLAHQQAVAMNSAMLMSLFGYPNLKQNAQAIMDIIATGKPFETLQQLTQY.

Residues Gly-81, 84–85, Thr-89, 91–94, 109–117, and Ala-121 contribute to the 5-phospho-alpha-D-ribose 1-diphosphate site; these read GD, NIST, and KHGNRSVSS. Residue Gly-81 coordinates anthranilate. Position 93 (Ser-93) interacts with Mg(2+). Asn-112 contributes to the anthranilate binding site. Arg-167 serves as a coordination point for anthranilate. Residues Asp-225 and Glu-226 each coordinate Mg(2+).

The protein belongs to the anthranilate phosphoribosyltransferase family. As to quaternary structure, homodimer. Requires Mg(2+) as cofactor.

The catalysed reaction is N-(5-phospho-beta-D-ribosyl)anthranilate + diphosphate = 5-phospho-alpha-D-ribose 1-diphosphate + anthranilate. The protein operates within amino-acid biosynthesis; L-tryptophan biosynthesis; L-tryptophan from chorismate: step 2/5. Catalyzes the transfer of the phosphoribosyl group of 5-phosphorylribose-1-pyrophosphate (PRPP) to anthranilate to yield N-(5'-phosphoribosyl)-anthranilate (PRA). In Pasteurella multocida (strain Pm70), this protein is Anthranilate phosphoribosyltransferase.